The following is a 273-amino-acid chain: NLP effector protein 10 (273 aa).

The signal sequence occupies residues 1–21; it reads MKLPTFLIGFVALLVTSNGSA. The N-linked (GlcNAc...) asparagine glycan is linked to Asn-91. Positions 129-139 match the Conserved undecapeptide motif motif; sequence AIMYAWYLPRA. The short motif at 149-155 is the Conserved heptapeptide motif element; that stretch reads GHRHYWL.

It belongs to the Necrosis inducing protein (NPP1) family.

Its subcellular location is the secreted. Secreted effector that acts as a pathogen-associated molecular pattern (PAMP) recognized by the plant immune system. Seems not to induce necrosis in Nicotiana benthamiana leaves but significantly improves disease resistance of Arabidopsis thaliana to Hyaloperonospora arabidopsidis and causes an inhibition of plant growth which is typically associated with enhanced immunity when over-expressed in Arabidopsis. The chain is NLP effector protein 10 from Plasmopara viticola (Downy mildew of grapevine).